Here is a 376-residue protein sequence, read N- to C-terminus: N-acetyldiaminopimelate deacetylase (376 aa).

Residue D69 is part of the active site. Residue E128 is the Proton acceptor of the active site.

The protein belongs to the peptidase M20A family. N-acetyldiaminopimelate deacetylase subfamily.

The catalysed reaction is N-acetyl-(2S,6S)-2,6-diaminopimelate + H2O = (2S,6S)-2,6-diaminopimelate + acetate. It participates in amino-acid biosynthesis; L-lysine biosynthesis via DAP pathway; LL-2,6-diaminopimelate from (S)-tetrahydrodipicolinate (acetylase route): step 3/3. Functionally, catalyzes the conversion of N-acetyl-diaminopimelate to diaminopimelate and acetate. The polypeptide is N-acetyldiaminopimelate deacetylase (Bacillus mycoides (strain KBAB4) (Bacillus weihenstephanensis)).